Here is a 269-residue protein sequence, read N- to C-terminus: Ribosomal RNA large subunit methyltransferase E (269 aa).

S-adenosyl-L-methionine contacts are provided by G58, W60, D78, D96, and D120. The active-site Proton acceptor is K160. The segment at 234 to 269 (HEKKEGNETSDNDEDNNKNGLMIKKIKELRGKRSKL) is disordered. Basic and acidic residues predominate over residues 258 to 269 (KIKELRGKRSKL).

The protein belongs to the class I-like SAM-binding methyltransferase superfamily. RNA methyltransferase RlmE family.

Its subcellular location is the cytoplasm. The enzyme catalyses uridine(2552) in 23S rRNA + S-adenosyl-L-methionine = 2'-O-methyluridine(2552) in 23S rRNA + S-adenosyl-L-homocysteine + H(+). Its function is as follows. Specifically methylates the uridine in position 2552 of 23S rRNA at the 2'-O position of the ribose in the fully assembled 50S ribosomal subunit. The protein is Ribosomal RNA large subunit methyltransferase E of Methanococcus aeolicus (strain ATCC BAA-1280 / DSM 17508 / OCM 812 / Nankai-3).